The chain runs to 370 residues: Versatile peroxidase VPS1 (370 aa).

A signal peptide spans 1–20; sequence MAFAKLSAFVLALGATVALG. A propeptide spanning residues 21-31 is cleaved from the precursor; sequence ESPTHRCLNKR. 4 cysteine pairs are disulfide-bonded: Cys34-Cys46, Cys45-Cys315, Cys65-Cys151, and Cys279-Cys344. Mn(2+) contacts are provided by Glu67 and Glu71. Catalysis depends on His78, which acts as the Proton acceptor. 4 residues coordinate Ca(2+): Asp79, Gly97, Asp99, and Ser101. N-linked (GlcNAc...) asparagine glycosylation is present at Asn133. The active-site Tryptophan radical intermediate is the Trp201. His206 lines the heme b pocket. Thr207 is a binding site for Ca(2+). 210–214 provides a ligand contact to heme b; the sequence is AADHV. Asp212 lines the Mn(2+) pocket. Asp224, Thr226, Thr229, and Asp231 together coordinate Ca(2+).

The protein belongs to the peroxidase family. Ligninase subfamily. It depends on heme b as a cofactor. The cofactor is Ca(2+).

The protein localises to the secreted. The enzyme catalyses 1-(4-hydroxy-3-methoxyphenyl)-2-(2-methoxyphenoxy)propane-1,3-diol + H2O2 = guaiacol + vanillin + glycolaldehyde + H2O. It catalyses the reaction 2 Mn(2+) + H2O2 + 2 H(+) = 2 Mn(3+) + 2 H2O. In terms of biological role, a versatile ligninolytic peroxidase that combines the substrate specificity characteristics of the two other ligninolytic peroxidases, manganese peroxidase and lignin peroxidase. This chain is Versatile peroxidase VPS1 (vps1), found in Pleurotus eryngii (Boletus of the steppes).